The primary structure comprises 1663 residues: Glutamine-rich protein 2 (1663 aa).

Disordered regions lie at residues histidine 80–alanine 239, glycine 423–glutamine 481, alanine 575–leucine 615, threonine 880–proline 925, and arginine 948–glutamine 984. Polar residues-rich tracts occupy residues threonine 84–isoleucine 103 and glycine 131–proline 150. The span at serine 171 to leucine 182 shows a compositional bias: basic and acidic residues. Low complexity predominate over residues glutamine 206–valine 217. The segment covering histidine 958–glycine 975 has biased composition (basic and acidic residues). Coiled coils occupy residues lysine 1085–serine 1160 and glutamate 1286–lysine 1325. Positions threonine 1609–serine 1619 are enriched in basic and acidic residues. Residues threonine 1609–arginine 1663 are disordered. Over residues serine 1623 to arginine 1636 the composition is skewed to basic residues. The segment covering serine 1639–arginine 1663 has biased composition (polar residues).

Interacts with AKAP3, ODF2 and TSSK4. Interacts with AKAP4. Expressed in the sperm.

Its subcellular location is the nucleus membrane. The protein localises to the nucleus. It is found in the cytoplasm. The protein resides in the cell projection. It localises to the cilium. Its subcellular location is the flagellum. Its function is as follows. Has an essential role in the formation of sperm flagella and flagellar structure maintainance. It acts as a suppressor of ubiquitination and degradation of proteins involved in flagellar development and motility. The protein is Glutamine-rich protein 2 (QRICH2) of Homo sapiens (Human).